The chain runs to 517 residues: DNA-binding protein Ikaros (517 aa).

Residues 1-71 form a disordered region; the sequence is MDVDEGQDMS…QSDEENGRAC (71 aa). Ser-13 is modified (phosphoserine). Residue Thr-23 is modified to Phosphothreonine. The span at 37–47 shows a compositional bias: polar residues; that stretch reads LSTTSGAQQNS. Lys-58 is covalently cross-linked (Glycyl lysine isopeptide (Lys-Gly) (interchain with G-Cter in SUMO)). 2 positions are modified to phosphoserine: Ser-63 and Ser-101. Residues 117 to 139 form a C2H2-type 1 zinc finger; that stretch reads LKCDICGIVCIGPNVLMVHKRSH. Thr-140 is modified (phosphothreonine). The C2H2-type 2 zinc-finger motif lies at 144–166; sequence FQCNQCGASFTQKGNLLRHIKLH. The tract at residues 153 to 162 is required for both high-affinity DNA binding and pericentromeric heterochromatin localization; sequence FTQKGNLLRH. Ser-167 bears the Phosphoserine mark. Residues 172–194 form a C2H2-type 3 zinc finger; sequence FKCHLCNYACRRRDALTGHLRTH. Positions 179-194 are required for both high-affinity DNA binding and pericentromeric heterochromatin localization; the sequence is YACRRRDALTGHLRTH. Ser-195 is subject to Phosphoserine. Residues 200-223 form a C2H2-type 4 zinc finger; it reads HKCGYCGRSYKQRSSLEEHKERCH. Residue Lys-239 forms a Glycyl lysine isopeptide (Lys-Gly) (interchain with G-Cter in SUMO) linkage. 9 positions are modified to phosphoserine: Ser-259, Ser-287, Ser-293, Ser-357, Ser-360, Ser-384, Ser-386, Ser-388, and Ser-392. The tract at residues 376–400 is disordered; the sequence is SVSSEREASPSNSCQDSTDTESNAE. Position 393 is a phosphothreonine (Thr-393). Ser-397 and Ser-440 each carry phosphoserine. 2 C2H2-type zinc fingers span residues 457–479 and 488–512; these read YKCEHCRVLFLDHVMYTIHMGCH and FECNMCGYHSQDRYEFSSHITRGEH. The tract at residues 463 to 466 is required for binding PP1CC; the sequence is RVLF.

It belongs to the Ikaros C2H2-type zinc-finger protein family. As to quaternary structure, heterodimer with other IKAROS family members. Interacts with IKZF4 and IKZF5. Component of the chromatin-remodeling NuRD repressor complex which includes at least HDAC1, HDAC2, RBBP4, RBBP7, IKZF1, MTA2, MBD2, MBD3, MTA1L1, CHD3 and CHD4. Interacts directly with the CHD4 component of the NuRD complex. Interacts directly with SMARCA4; the interaction associates IKFZ1 with the BAF complex. Interacts with SUMO1; the interaction sumoylates IKAROS, promoted by PIAS2 and PIAS3. Interacts with PIAS2 (isoform alpha); the interaction promotes sumoylation and reduces transcription repression. Interacts, to a lesser extent, with PIAS3. Interacts with PPP1CC; the interaction targets PPP1CC to pericentromeric heterochromatin, dephosphorylates IKAROS, stabilizes it and prevents it from degradation. Interacts with IKZF3. Post-translationally, phosphorylation at Ser-357 and Ser-360 downstream of SYK induces nuclear translocation. Phosphorylation controls cell-cycle progression from late G(1) stage to S stage. Hyperphosphorylated during G2/M phase. Dephosphorylated state during late G(1) phase. Phosphorylation on Thr-140 is required for DNA and pericentromeric location during mitosis. CK2 is the main kinase, in vitro. GSK3 and CDK may also contribute to phosphorylation of the C-terminal serine and threonine residues. Phosphorylation on these C-terminal residues reduces the DNA-binding ability. Phosphorylation/dephosphorylation events on Ser-13 and Ser-293 regulate TDT expression during thymocyte differentiation. Dephosphorylation by protein phosphatase 1 regulates stability and pericentromeric heterochromatin location. Phosphorylated in both lymphoid and non-lymphoid tissues. In terms of processing, sumoylated. Simultaneous sumoylation on the 2 sites results in a loss of both HDAC-dependent and HDAC-independent repression. Has no effect on pericentromeric heterochromatin location. Desumoylated by SENP1. Polyubiquitinated. As to expression, strongly expressed in T-cells and their progenitors,in B-cells, and in all early embryonic retinal progenitor cells (RPCs). Isoforms V and VI are the predominant isoforms in lymphocytes.

Its subcellular location is the nucleus. The protein resides in the cytoplasm. Transcription regulator of hematopoietic cell differentiation. Binds gamma-satellite DNA. Binds with higher affinity to gamma satellite A. Plays a role in the development of lymphocytes, B- and T-cells. Binds and activates the enhancer (delta-A element) of the CD3-delta gene. Repressor of the TDT (terminal deoxynucleotidyltransferase) gene during thymocyte differentiation. Regulates transcription through association with both HDAC-dependent and HDAC-independent complexes. Targets the 2 chromatin-remodeling complexes, NuRD and BAF (SWI/SNF), in a single complex (PYR complex), to the beta-globin locus in adult erythrocytes. Increases normal apoptosis in adult erythroid cells. Confers early temporal competence to retinal progenitor cells (RPCs). Function is isoform-specific and is modulated by dominant-negative inactive isoforms. The protein is DNA-binding protein Ikaros (Ikzf1) of Mus musculus (Mouse).